The sequence spans 292 residues: 4-hydroxy-tetrahydrodipicolinate synthase (292 aa).

T48 provides a ligand contact to pyruvate. Residue Y136 is the Proton donor/acceptor of the active site. K164 acts as the Schiff-base intermediate with substrate in catalysis. I204 is a pyruvate binding site.

Belongs to the DapA family. As to quaternary structure, homotetramer; dimer of dimers.

Its subcellular location is the cytoplasm. The enzyme catalyses L-aspartate 4-semialdehyde + pyruvate = (2S,4S)-4-hydroxy-2,3,4,5-tetrahydrodipicolinate + H2O + H(+). It participates in amino-acid biosynthesis; L-lysine biosynthesis via DAP pathway; (S)-tetrahydrodipicolinate from L-aspartate: step 3/4. In terms of biological role, catalyzes the condensation of (S)-aspartate-beta-semialdehyde [(S)-ASA] and pyruvate to 4-hydroxy-tetrahydrodipicolinate (HTPA). The sequence is that of 4-hydroxy-tetrahydrodipicolinate synthase from Acetivibrio thermocellus (strain ATCC 27405 / DSM 1237 / JCM 9322 / NBRC 103400 / NCIMB 10682 / NRRL B-4536 / VPI 7372) (Clostridium thermocellum).